The chain runs to 1978 residues: Protein MOR1 (1978 aa).

2 HEAT repeats span residues 48–86 and 165–202; these read DPRL…AADS and IPPK…WIGK. Residues 230–264 form a disordered region; the sequence is AGAKPTRKIRSEQDKEPEAEASSDVVGDGPSEEAV. Over residues 238 to 247 the composition is skewed to basic and acidic residues; the sequence is IRSEQDKEPE. HEAT repeat units follow at residues 322 to 359, 363 to 400, and 442 to 479; these read GDFS…GLRT, ASSR…AGCL, and KAHK…SVGM. A disordered region spans residues 501-587; sequence IAGSGGGDQA…SVEPPEDVEP (87 aa). The span at 510-527 shows a compositional bias: low complexity; that stretch reads AGTSSVTVQSSVGSTATG. The span at 565–577 shows a compositional bias: basic and acidic residues; it reads GKKDGSVRNEGSK. HEAT repeat units follow at residues 849 to 886, 890 to 928, 932 to 969, and 1008 to 1045; these read DIST…EANK, PTGT…AMGP, KASK…AVHL, and VDAI…VSGQ. The interval 1087 to 1115 is disordered; it reads SKGVTKISKSTSNGTLKQGNRSRAVPTKG. Positions 1093–1107 are enriched in polar residues; the sequence is ISKSTSNGTLKQGNR. HEAT repeat units follow at residues 1230-1253, 1254-1286, 1287-1325, and 1328-1365; these read LKVL…MTEA, EAAI…QIIQ, AYSV…TCGT, and GGLL…ILGA. Over residues 1393–1403 the composition is skewed to basic and acidic residues; it reads MEKRREGKPGE. Residues 1393–1431 form a disordered region; it reads MEKRREGKPGEARAALRRSVRDSGPEVAEQSGDISQTVP. One copy of the HEAT 14 repeat lies at 1535–1575; that stretch reads RSCKYVLNTLMQTFQNKKLAHAVKEGTLESLITELLLWLLD. The segment at 1837 to 1862 is disordered; that stretch reads AAAGRTPSSLPLSTPPPSSLALPSPD.

The protein belongs to the TOG/XMAP215 family. As to expression, expressed in roots, cotyledons, rosette leaves, stems, open flowers and green siliques.

The protein resides in the cytoplasm. Its subcellular location is the cytoskeleton. The protein localises to the phragmoplast. It is found in the spindle. In terms of biological role, microtubule-binding protein that is essential for cortical microtubules organization and function. Essential for maintaining the interphase cortical array and for correct morphogenesis. Promotes rapid growth and shrinkage of microtubules and suppresses the pausing of interphase microtubules. Regulates the structure and function of microtubule arrays during mitosis and cytokinesis. Probably not required for cellulose microfibrils alignment in roots. The polypeptide is Protein MOR1 (MOR1) (Arabidopsis thaliana (Mouse-ear cress)).